The following is a 353-amino-acid chain: E3 ubiquitin-protein ligase Os03g0188200 (353 aa).

Residues 48–68 (VVVLVALITAFVLLTVFSVLI) form a helical membrane-spanning segment. An RING-type; atypical zinc finger spans residues 133 to 175 (CAVCLAEFADSDELRVLPACCHVFHPDCIDPWLAAAVTCPLCR). Basic and acidic residues-rich tracts occupy residues 308–318 (ADWDAGEEHGG) and 340–353 (GSKE…LNRV). The interval 308 to 353 (ADWDAGEEHGGSKRVHPVAGAQDETPSGSGSDGSKENSDSDALNRV) is disordered.

It is found in the membrane. The catalysed reaction is S-ubiquitinyl-[E2 ubiquitin-conjugating enzyme]-L-cysteine + [acceptor protein]-L-lysine = [E2 ubiquitin-conjugating enzyme]-L-cysteine + N(6)-ubiquitinyl-[acceptor protein]-L-lysine.. The protein operates within protein modification; protein ubiquitination. Functionally, possesses E3 ubiquitin-protein ligase in vitro. In Oryza sativa subsp. japonica (Rice), this protein is E3 ubiquitin-protein ligase Os03g0188200.